Here is a 133-residue protein sequence, read N- to C-terminus: Vesicle transport protein GOT1A (133 aa).

The Cytoplasmic segment spans residues 1-9 (MISITEWQK). Residues 10-30 (IGVGITGFGVFFILFGILLYF) traverse the membrane as a helical segment. A topological domain (lumenal) is located at residue D31. Residues 32-52 (SVLLAFGNLLFLTGLSLIIGL) form a helical membrane-spanning segment. At 53–68 (RRTFAFFFQRHKLKGT) the chain is on the cytoplasmic side. The helical transmembrane segment at 69–89 (SFFLGGVAIVLLRWPLLGMLL) threads the bilayer. Over 90–92 (EAY) the chain is Lumenal. A helical membrane pass occupies residues 93–113 (GFISLFKGFFPVVFGFLGSAF). Residues 114 to 133 (NIPFLSTLFQKLQGSSSSMV) are Cytoplasmic-facing.

This sequence belongs to the GOT1 family.

It localises to the golgi apparatus membrane. In terms of biological role, may be involved in fusion of ER-derived transport vesicles with the Golgi complex. In Mus musculus (Mouse), this protein is Vesicle transport protein GOT1A.